We begin with the raw amino-acid sequence, 102 residues long: PqqA binding protein (102 aa).

Belongs to the PqqD family. As to quaternary structure, monomer. Interacts with PqqE.

It participates in cofactor biosynthesis; pyrroloquinoline quinone biosynthesis. Functionally, functions as a PqqA binding protein and presents PqqA to PqqE, in the pyrroloquinoline quinone (PQQ) biosynthetic pathway. The sequence is that of PqqA binding protein from Rhodopseudomonas palustris (strain TIE-1).